A 362-amino-acid chain; its full sequence is 3-dehydroquinate synthase (362 aa).

NAD(+)-binding positions include 70 to 75 (DGEQYK), 104 to 108 (GVIGD), 128 to 129 (TT), Lys-141, and Lys-150. Residues Glu-183, His-246, and His-263 each coordinate Zn(2+).

It belongs to the sugar phosphate cyclases superfamily. Dehydroquinate synthase family. NAD(+) serves as cofactor. Co(2+) is required as a cofactor. The cofactor is Zn(2+).

The protein resides in the cytoplasm. The enzyme catalyses 7-phospho-2-dehydro-3-deoxy-D-arabino-heptonate = 3-dehydroquinate + phosphate. The protein operates within metabolic intermediate biosynthesis; chorismate biosynthesis; chorismate from D-erythrose 4-phosphate and phosphoenolpyruvate: step 2/7. Functionally, catalyzes the conversion of 3-deoxy-D-arabino-heptulosonate 7-phosphate (DAHP) to dehydroquinate (DHQ). This is 3-dehydroquinate synthase from Pasteurella multocida (strain Pm70).